Reading from the N-terminus, the 584-residue chain is Gag-Pro polyprotein (584 aa).

Gly-2 is lipidated: N-myristoyl glycine; by host. Residues 95–116 form a disordered region; that stretch reads EAPPSAPLAEDPQKPPPYPEQA. A PTAP/PSAP motif motif is present at residues 98–101; the sequence is PSAP. Residues 109-112 carry the PPXY motif motif; the sequence is PPPY. 2 consecutive CCHC-type zinc fingers follow at residues 349–366 and 372–389; these read QPCF…DCKQ and GPCP…DCPQ. The Peptidase A2 domain maps to 457 to 535; sequence VQALLDTGAD…NQWTILGRDA (79 aa). Asp-462 serves as the catalytic For protease activity; shared with dimeric partner.

In terms of assembly, interacts with human TSG101. This interaction is essential for budding and release of viral particles. In terms of processing, specific enzymatic cleavages by the viral protease yield mature proteins. The polyprotein is cleaved during and after budding, this process is termed maturation. The protease is autoproteolytically processed at its N- and C-termini.

Its subcellular location is the virion. Its function is as follows. Matrix protein p19 targets Gag, Gag-Pro and Gag-Pro-Pol polyproteins to the plasma membrane via a multipartite membrane binding signal, that includes its myristoylated N-terminus. Also mediates nuclear localization of the preintegration complex. Capsid protein p24 forms the conical core of the virus that encapsulates the genomic RNA-nucleocapsid complex. Functionally, nucleocapsid protein p15 is involved in the packaging and encapsidation of two copies of the genome. In terms of biological role, the aspartyl protease mediates proteolytic cleavages of Gag, Gag-Pro and Gag-Pro-Pol polyproteins during or shortly after the release of the virion from the plasma membrane. Cleavages take place as an ordered, step-wise cascade to yield mature proteins. This process is called maturation. Displays maximal activity during the budding process just prior to particle release from the cell. Hydrolyzes host EIF4GI in order to shut off the capped cellular mRNA translation. The resulting inhibition of cellular protein synthesis serves to ensure maximal viral gene expression and to evade host immune response. This Homo sapiens (Human) protein is Gag-Pro polyprotein (gag-pro).